Reading from the N-terminus, the 362-residue chain is Cobalt-precorrin-5B C(1)-methyltransferase (362 aa).

This sequence belongs to the CbiD family.

It catalyses the reaction Co-precorrin-5B + S-adenosyl-L-methionine = Co-precorrin-6A + S-adenosyl-L-homocysteine. The protein operates within cofactor biosynthesis; adenosylcobalamin biosynthesis; cob(II)yrinate a,c-diamide from sirohydrochlorin (anaerobic route): step 6/10. Catalyzes the methylation of C-1 in cobalt-precorrin-5B to form cobalt-precorrin-6A. This chain is Cobalt-precorrin-5B C(1)-methyltransferase, found in Burkholderia lata (strain ATCC 17760 / DSM 23089 / LMG 22485 / NCIMB 9086 / R18194 / 383).